A 509-amino-acid polypeptide reads, in one-letter code: Maturase K (509 aa).

Belongs to the intron maturase 2 family. MatK subfamily.

The protein resides in the plastid. Functionally, usually encoded in the trnK tRNA gene intron. Probably assists in splicing its own and other chloroplast group II introns. This is Maturase K from Cuscuta reflexa (Southern Asian dodder).